Consider the following 610-residue polypeptide: Elongation factor 4 (610 aa).

The 183-residue stretch at 11-193 (ENIRNFSIIA…QIVEKVPAPS (183 aa)) folds into the tr-type G domain. Residues 23–28 (DHGKST) and 140–143 (NKID) each bind GTP.

It belongs to the TRAFAC class translation factor GTPase superfamily. Classic translation factor GTPase family. LepA subfamily.

The protein localises to the cell membrane. It catalyses the reaction GTP + H2O = GDP + phosphate + H(+). Functionally, required for accurate and efficient protein synthesis under certain stress conditions. May act as a fidelity factor of the translation reaction, by catalyzing a one-codon backward translocation of tRNAs on improperly translocated ribosomes. Back-translocation proceeds from a post-translocation (POST) complex to a pre-translocation (PRE) complex, thus giving elongation factor G a second chance to translocate the tRNAs correctly. Binds to ribosomes in a GTP-dependent manner. In Streptococcus equi subsp. zooepidemicus (strain MGCS10565), this protein is Elongation factor 4.